The primary structure comprises 106 residues: Gibberellin-regulated protein 4 (106 aa).

The first 25 residues, 1–25 (MAKSYGAIFLLTLIVLFMLQTMVMA), serve as a signal peptide directing secretion.

The protein belongs to the GASA family. Six disulfide bonds may be present. As to expression, expressed in flower buds, style, stamen filaments, vasculature of petals, root phloem, vasculature of cotyledons and rosette leaves and developing embryo.

It localises to the secreted. In terms of biological role, gibberellin-regulated protein involved in the regulation of floral meristem and floral organ identity, and promotion of seed size and weight. May play a role in the promotion of gibberellin responses such as regulation of flowering under short-day conditions, seed germination and inhibition of gibberellin oxidase. Possesses redox activity in E.coli and may function in redox regulation in planta. The sequence is that of Gibberellin-regulated protein 4 (GASA4) from Arabidopsis thaliana (Mouse-ear cress).